We begin with the raw amino-acid sequence, 408 residues long: Elongation factor Tu, chloroplastic (408 aa).

One can recognise a tr-type G domain in the interval 10–214 (KPHVNIGTIG…AVDSYIPTPK (205 aa)). Positions 19–26 (GHVDHGKT) are G1. GTP is bound at residue 19-26 (GHVDHGKT). A Mg(2+)-binding site is contributed by Thr26. Residues 60–64 (GITIN) form a G2 region. Positions 81-84 (DCPG) are G3. GTP-binding positions include 81–85 (DCPGH) and 136–139 (NKED). The tract at residues 136–139 (NKED) is G4. The tract at residues 174 to 176 (SAL) is G5.

This sequence belongs to the TRAFAC class translation factor GTPase superfamily. Classic translation factor GTPase family. EF-Tu/EF-1A subfamily.

It is found in the plastid. The protein resides in the chloroplast. It carries out the reaction GTP + H2O = GDP + phosphate + H(+). Functionally, GTP hydrolase that promotes the GTP-dependent binding of aminoacyl-tRNA to the A-site of ribosomes during protein biosynthesis. This Chara connivens (Convergent stonewort) protein is Elongation factor Tu, chloroplastic (tufA).